A 294-amino-acid chain; its full sequence is Elongation factor Ts (294 aa).

The segment at 80-83 (TDFV) is involved in Mg(2+) ion dislocation from EF-Tu.

The protein belongs to the EF-Ts family.

The protein resides in the cytoplasm. Functionally, associates with the EF-Tu.GDP complex and induces the exchange of GDP to GTP. It remains bound to the aminoacyl-tRNA.EF-Tu.GTP complex up to the GTP hydrolysis stage on the ribosome. This chain is Elongation factor Ts, found in Listeria monocytogenes serovar 1/2a (strain ATCC BAA-679 / EGD-e).